Here is a 298-residue protein sequence, read N- to C-terminus: MIRNPMSDIDAILITGPTASGKSALAVELARAHDGVVVNADSMQVYDTLSVLTARPSETDMEGIPHHLYGHVPAGQAYSTGVWLREAAALVAQLREEGRTPVFVGGTGLYFKALTGGLSDMPDIPTEIRSRLRERLLAEGTDELYRELVLCDPTAAESLSSQDGQRIVRALEVIEATGQSIAAFQGKTGPVIIDADRARKIVVLPDRAVLHQRINGRFEKMLAMGAEAEVKALLALGLSPEMPVMKAIGVSQIAAMLRGEMTRAEVLDTGAAATRQYAKRQMTWFRNQMDESWERVSP.

16 to 23 serves as a coordination point for ATP; the sequence is GPTASGKS. 18–23 contributes to the substrate binding site; that stretch reads TASGKS. Interaction with substrate tRNA regions lie at residues 41 to 44 and 165 to 169; these read DSMQ and QRIVR.

This sequence belongs to the IPP transferase family. As to quaternary structure, monomer. The cofactor is Mg(2+).

It carries out the reaction adenosine(37) in tRNA + dimethylallyl diphosphate = N(6)-dimethylallyladenosine(37) in tRNA + diphosphate. Functionally, catalyzes the transfer of a dimethylallyl group onto the adenine at position 37 in tRNAs that read codons beginning with uridine, leading to the formation of N6-(dimethylallyl)adenosine (i(6)A). This is tRNA dimethylallyltransferase from Rhizobium rhizogenes (strain K84 / ATCC BAA-868) (Agrobacterium radiobacter).